We begin with the raw amino-acid sequence, 231 residues long: Orotidine 5'-phosphate decarboxylase (231 aa).

Substrate contacts are provided by residues aspartate 11, lysine 33, 60–69, threonine 120, arginine 181, glutamine 190, glycine 210, and arginine 211; that span reads DLKFHDIPNT. Lysine 62 acts as the Proton donor in catalysis.

The protein belongs to the OMP decarboxylase family. Type 1 subfamily. In terms of assembly, homodimer.

It carries out the reaction orotidine 5'-phosphate + H(+) = UMP + CO2. The protein operates within pyrimidine metabolism; UMP biosynthesis via de novo pathway; UMP from orotate: step 2/2. Its function is as follows. Catalyzes the decarboxylation of orotidine 5'-monophosphate (OMP) to uridine 5'-monophosphate (UMP). This Colwellia psychrerythraea (strain 34H / ATCC BAA-681) (Vibrio psychroerythus) protein is Orotidine 5'-phosphate decarboxylase.